The sequence spans 55 residues: uncharacterized protein (55 aa).

The N-terminal stretch at 1 to 25 is a signal peptide; that stretch reads MKFVKAIWPFVAVAIVFMFMSAFKF.

This is an uncharacterized protein from Bacillus subtilis (strain 168).